Reading from the N-terminus, the 505-residue chain is Lysine--tRNA ligase (505 aa).

Glu-415 and Glu-422 together coordinate Mg(2+).

This sequence belongs to the class-II aminoacyl-tRNA synthetase family. In terms of assembly, homodimer. Mg(2+) is required as a cofactor.

The protein localises to the cytoplasm. It catalyses the reaction tRNA(Lys) + L-lysine + ATP = L-lysyl-tRNA(Lys) + AMP + diphosphate. This is Lysine--tRNA ligase from Shigella flexneri.